The sequence spans 773 residues: Ribosomal protein S6 kinase alpha-4 (773 aa).

The Protein kinase 1 domain occupies 33–301 (FALLKVLGTG…AQEVKSHPFF (269 aa)). Residues 39–47 (LGTGAYGKV) and K65 contribute to the ATP site. The Proton acceptor role is filled by D161. Residue S196 is modified to Phosphoserine; by autocatalysis. The 70-residue stretch at 302–371 (QGLDWVALAA…VAPSILFDHN (70 aa)) folds into the AGC-kinase C-terminal domain. Position 343 is a phosphoserine; by MAPK1, MAPK3 and MAPK14 (S343). S347 is modified (phosphoserine). S360 and S365 each carry phosphoserine; by autocatalysis. ATP-binding positions include 417–425 (LGQGSFSVC) and K440. The 258-residue stretch at 417-674 (LGQGSFSVCR…LEGLRSSSWL (258 aa)) folds into the Protein kinase 2 domain. D530 serves as the catalytic Proton acceptor. Residue T542 is modified to Phosphothreonine. A Phosphothreonine; by MAPK1, MAPK3 and MAPK14 modification is found at T568. 2 positions are modified to phosphoserine: S634 and S678. 2 disordered regions span residues 674–696 (LQDGSARSSPPLRTPDVLESSGP) and 728–773 (AKRR…LSPS). T687 carries the phosphothreonine modification. Residues S737 and S745 each carry the phosphoserine; by autocatalysis modification.

Belongs to the protein kinase superfamily. AGC Ser/Thr protein kinase family. S6 kinase subfamily. In terms of assembly, forms a complex with either MAPK1/ERK2 or MAPK3/ERK1 in quiescent cells which transiently dissociates following mitogenic stimulation. Also associates with MAPK14/p38-alpha. Activated RPS6KA4 associates with and phosphorylates the NF-kappa-B p65 subunit RELA. Mg(2+) serves as cofactor. Post-translationally, ser-343 and Thr-568 phosphorylation is required for kinase activity. Ser-343 and Ser-196 are autophosphorylated by the C-terminal kinase domain, and their phosphorylation is essential for the catalytic activity of the N-terminal kinase domain. Phosphorylated at Ser-343, Thr-568 and Thr-687 by MAPK1/ERK2, MAPK3/ERK1 and MAPK14/p38-alpha. Autophosphorylated at Ser-737 and Ser-745 by the N-terminal kinase domain.

The protein localises to the nucleus. It catalyses the reaction L-seryl-[protein] + ATP = O-phospho-L-seryl-[protein] + ADP + H(+). It carries out the reaction L-threonyl-[protein] + ATP = O-phospho-L-threonyl-[protein] + ADP + H(+). Its activity is regulated as follows. Activated by phosphorylation at Ser-343, Thr-568 and Thr-687 by MAPK1/ERK2, MAPK3/ERK1 and MAPK14/p38-alpha, and by further autophosphorylation of Ser-196, Ser-360 and Ser-365 by the activated C-terminal kinase domain. In terms of biological role, serine/threonine-protein kinase that is required for the mitogen or stress-induced phosphorylation of the transcription factors CREB1 and ATF1 and for the regulation of the transcription factor RELA, and that contributes to gene activation by histone phosphorylation and functions in the regulation of inflammatory genes. Phosphorylates CREB1 and ATF1 in response to mitogenic or stress stimuli such as UV-C irradiation, epidermal growth factor (EGF) and anisomycin. Plays an essential role in the control of RELA transcriptional activity in response to TNF. Phosphorylates 'Ser-10' of histone H3 in response to mitogenics, stress stimuli and EGF, which results in the transcriptional activation of several immediate early genes, including proto-oncogenes c-fos/FOS and c-jun/JUN. May also phosphorylate 'Ser-28' of histone H3. Mediates the mitogen- and stress-induced phosphorylation of high mobility group protein 1 (HMGN1/HMG14). In lipopolysaccharide-stimulated primary macrophages, acts downstream of the Toll-like receptor TLR4 to limit the production of pro-inflammatory cytokines. Functions probably by inducing transcription of the MAP kinase phosphatase DUSP1 and the anti-inflammatory cytokine interleukin 10 (IL10), via CREB1 and ATF1 transcription factors. The sequence is that of Ribosomal protein S6 kinase alpha-4 (Rps6ka4) from Mus musculus (Mouse).